The following is a 225-amino-acid chain: Imidazoleglycerol-phosphate dehydratase (225 aa).

Belongs to the imidazoleglycerol-phosphate dehydratase family.

It carries out the reaction D-erythro-1-(imidazol-4-yl)glycerol 3-phosphate = 3-(imidazol-4-yl)-2-oxopropyl phosphate + H2O. The protein operates within amino-acid biosynthesis; L-histidine biosynthesis; L-histidine from 5-phospho-alpha-D-ribose 1-diphosphate: step 6/9. This Pyricularia oryzae (strain 70-15 / ATCC MYA-4617 / FGSC 8958) (Rice blast fungus) protein is Imidazoleglycerol-phosphate dehydratase (PTH3).